The sequence spans 176 residues: Methylmalonyl-CoA epimerase, mitochondrial (176 aa).

The N-terminal 36 residues, 1–36 (MARVLKAAAANAVGLFSRLQAPIPTVRASSTSQPLD), are a transit peptide targeting the mitochondrion. The VOC domain occupies 47–176 (RLNHVAIAVP…GGVLVELEQA (130 aa)). His50 is a Co(2+) binding site. Lys114 is subject to N6-succinyllysine. His122 serves as a coordination point for Co(2+). Lys150 is subject to N6-acetyllysine; alternate. Lys150 is modified (N6-succinyllysine; alternate). Glu172 lines the Co(2+) pocket.

This sequence belongs to the methylmalonyl-CoA epimerase family.

The protein localises to the mitochondrion. The catalysed reaction is (R)-methylmalonyl-CoA = (S)-methylmalonyl-CoA. Its function is as follows. Methylmalonyl-CoA epimerase involved in propionyl-CoA metabolism. The chain is Methylmalonyl-CoA epimerase, mitochondrial from Homo sapiens (Human).